Consider the following 504-residue polypeptide: Protein psiD (504 aa).

A signal peptide spans 1-21 (MKYSYLLLILLLSNLYKEGFS). N-linked (GlcNAc...) asparagine glycosylation is found at Asn87, Asn136, Asn236, Asn252, Asn290, and Asn373. The 141-residue stretch at 111–251 (LTRVGDSTYA…YDACGVCDGH (141 aa)) folds into the PA14 domain. Residues 417–430 (TVTPTVTPTVTPTP) show a composition bias toward low complexity. The disordered stretch occupies residues 417 to 453 (TVTPTVTPTVTPTPTTTPTPSPTTVPPRPTPTPLPAD). The segment covering 431-453 (TTTPTPSPTTVPPRPTPTPLPAD) has biased composition (pro residues). Asn483 carries N-linked (GlcNAc...) asparagine glycosylation.

It belongs to the prespore-cell-inducing factor family.

Its subcellular location is the secreted. This is Protein psiD (psiD) from Dictyostelium discoideum (Social amoeba).